Reading from the N-terminus, the 115-residue chain is MGKEKVEEKKENKSGVKEKIQNWIADAKKRGTWQTLLLKQIGNTRLNVAVTPDGSALLKIFINRPQNGIIFSLNELEDIKKAIEIAESIKSELESIPEFKNAKVSLKTQKGVLDE.

This is an uncharacterized protein from Acidianus filamentous virus 1 (isolate United States/Yellowstone) (AFV-1).